Reading from the N-terminus, the 443-residue chain is Glucose-6-phosphate isomerase (443 aa).

Residue glutamate 285 is the Proton donor of the active site. Active-site residues include histidine 306 and lysine 420.

This sequence belongs to the GPI family.

The protein localises to the cytoplasm. It carries out the reaction alpha-D-glucose 6-phosphate = beta-D-fructose 6-phosphate. It functions in the pathway carbohydrate biosynthesis; gluconeogenesis. The protein operates within carbohydrate degradation; glycolysis; D-glyceraldehyde 3-phosphate and glycerone phosphate from D-glucose: step 2/4. Functionally, catalyzes the reversible isomerization of glucose-6-phosphate to fructose-6-phosphate. The sequence is that of Glucose-6-phosphate isomerase from Staphylococcus aureus (strain NCTC 8325 / PS 47).